The following is a 384-amino-acid chain: Dual-specificity RNA methyltransferase RlmN (384 aa).

E93 serves as the catalytic Proton acceptor. The Radical SAM core domain maps to 99–339 (EETRGTLCVS…TTIRKTRGDD (241 aa)). The cysteines at positions 106 and 344 are disulfide-linked. 3 residues coordinate [4Fe-4S] cluster: C113, C117, and C120. S-adenosyl-L-methionine-binding positions include 170 to 171 (GE), S202, 224 to 226 (SLH), and N301. C344 acts as the S-methylcysteine intermediate in catalysis.

This sequence belongs to the radical SAM superfamily. RlmN family. [4Fe-4S] cluster is required as a cofactor.

The protein resides in the cytoplasm. It carries out the reaction adenosine(2503) in 23S rRNA + 2 reduced [2Fe-2S]-[ferredoxin] + 2 S-adenosyl-L-methionine = 2-methyladenosine(2503) in 23S rRNA + 5'-deoxyadenosine + L-methionine + 2 oxidized [2Fe-2S]-[ferredoxin] + S-adenosyl-L-homocysteine. The catalysed reaction is adenosine(37) in tRNA + 2 reduced [2Fe-2S]-[ferredoxin] + 2 S-adenosyl-L-methionine = 2-methyladenosine(37) in tRNA + 5'-deoxyadenosine + L-methionine + 2 oxidized [2Fe-2S]-[ferredoxin] + S-adenosyl-L-homocysteine. In terms of biological role, specifically methylates position 2 of adenine 2503 in 23S rRNA and position 2 of adenine 37 in tRNAs. m2A2503 modification seems to play a crucial role in the proofreading step occurring at the peptidyl transferase center and thus would serve to optimize ribosomal fidelity. The chain is Dual-specificity RNA methyltransferase RlmN from Cupriavidus pinatubonensis (strain JMP 134 / LMG 1197) (Cupriavidus necator (strain JMP 134)).